The following is a 139-amino-acid chain: Nucleoside diphosphate kinase (139 aa).

Residues Lys-10, Phe-58, Arg-86, Thr-92, Arg-104, and Asn-114 each contribute to the ATP site. Catalysis depends on His-117, which acts as the Pros-phosphohistidine intermediate.

The protein belongs to the NDK family. As to quaternary structure, homotetramer. The cofactor is Mg(2+).

The protein localises to the cytoplasm. The catalysed reaction is a 2'-deoxyribonucleoside 5'-diphosphate + ATP = a 2'-deoxyribonucleoside 5'-triphosphate + ADP. The enzyme catalyses a ribonucleoside 5'-diphosphate + ATP = a ribonucleoside 5'-triphosphate + ADP. Its function is as follows. Major role in the synthesis of nucleoside triphosphates other than ATP. The ATP gamma phosphate is transferred to the NDP beta phosphate via a ping-pong mechanism, using a phosphorylated active-site intermediate. This chain is Nucleoside diphosphate kinase, found in Rhodococcus jostii (strain RHA1).